Consider the following 58-residue polypeptide: Large ribosomal subunit protein bL32 (58 aa).

The protein belongs to the bacterial ribosomal protein bL32 family.

This chain is Large ribosomal subunit protein bL32, found in Caldicellulosiruptor saccharolyticus (strain ATCC 43494 / DSM 8903 / Tp8T 6331).